A 632-amino-acid chain; its full sequence is 1-deoxy-D-xylulose-5-phosphate synthase (632 aa).

Residues histidine 75 and 117 to 119 (GHA) contribute to the thiamine diphosphate site. Aspartate 146 contributes to the Mg(2+) binding site. Residues 147–148 (AA), asparagine 175, and glutamate 370 each bind thiamine diphosphate. Asparagine 175 serves as a coordination point for Mg(2+).

Belongs to the transketolase family. DXPS subfamily. Homodimer. Mg(2+) serves as cofactor. Thiamine diphosphate is required as a cofactor.

It carries out the reaction D-glyceraldehyde 3-phosphate + pyruvate + H(+) = 1-deoxy-D-xylulose 5-phosphate + CO2. The protein operates within metabolic intermediate biosynthesis; 1-deoxy-D-xylulose 5-phosphate biosynthesis; 1-deoxy-D-xylulose 5-phosphate from D-glyceraldehyde 3-phosphate and pyruvate: step 1/1. Functionally, catalyzes the acyloin condensation reaction between C atoms 2 and 3 of pyruvate and glyceraldehyde 3-phosphate to yield 1-deoxy-D-xylulose-5-phosphate (DXP). This Chlamydia muridarum (strain MoPn / Nigg) protein is 1-deoxy-D-xylulose-5-phosphate synthase.